A 230-amino-acid chain; its full sequence is Sugar fermentation stimulation protein homolog (230 aa).

Belongs to the SfsA family.

This is Sugar fermentation stimulation protein homolog from Caldivirga maquilingensis (strain ATCC 700844 / DSM 13496 / JCM 10307 / IC-167).